A 435-amino-acid chain; its full sequence is NADH-ubiquinone oxidoreductase chain 4 (435 aa).

Transmembrane regions (helical) follow at residues 27–47, 53–73, 80–100, 102–122, 132–152, 177–197, 206–226, 239–259, 267–285, 295–317, 324–344, 372–394, and 414–434; these read VLTI…ELNG, FVMG…YLSS, ASFN…FSVS, FFLF…LIVG, AGGY…WGVS, LWWL…FHLW, PVAG…YGLL, VFFV…GLAC, CLVA…LGVL, AIII…NAIY, LLVM…MCFL, SXAF…LYLY, and LCDV…FMFM.

Belongs to the complex I subunit 4 family.

The protein resides in the mitochondrion membrane. It carries out the reaction a ubiquinone + NADH + 5 H(+)(in) = a ubiquinol + NAD(+) + 4 H(+)(out). Functionally, core subunit of the mitochondrial membrane respiratory chain NADH dehydrogenase (Complex I) that is believed to belong to the minimal assembly required for catalysis. Complex I functions in the transfer of electrons from NADH to the respiratory chain. The immediate electron acceptor for the enzyme is believed to be ubiquinone. The polypeptide is NADH-ubiquinone oxidoreductase chain 4 (ND4) (Mytilus edulis (Blue mussel)).